Consider the following 153-residue polypeptide: Endoribonuclease YbeY (153 aa).

Residues His116, His120, and His126 each contribute to the Zn(2+) site.

It belongs to the endoribonuclease YbeY family. It depends on Zn(2+) as a cofactor.

The protein localises to the cytoplasm. Functionally, single strand-specific metallo-endoribonuclease involved in late-stage 70S ribosome quality control and in maturation of the 3' terminus of the 16S rRNA. The polypeptide is Endoribonuclease YbeY (Leifsonia xyli subsp. xyli (strain CTCB07)).